A 179-amino-acid polypeptide reads, in one-letter code: Inosine/xanthosine triphosphatase (179 aa).

Position 71 (Glu71) interacts with Mg(2+). Glu71 to Ala72 serves as a coordination point for substrate.

It belongs to the YjjX NTPase family. Homodimer. It depends on Mg(2+) as a cofactor. Mn(2+) is required as a cofactor.

The enzyme catalyses XTP + H2O = XDP + phosphate + H(+). The catalysed reaction is ITP + H2O = IDP + phosphate + H(+). Functionally, phosphatase that hydrolyzes non-canonical purine nucleotides such as XTP and ITP to their respective diphosphate derivatives. Probably excludes non-canonical purines from DNA/RNA precursor pool, thus preventing their incorporation into DNA/RNA and avoiding chromosomal lesions. This chain is Inosine/xanthosine triphosphatase, found in Shewanella sp. (strain MR-7).